The following is a 273-amino-acid chain: Elongation factor Ts (273 aa).

Residues 79-82 (TDFV) form an involved in Mg(2+) ion dislocation from EF-Tu region.

It belongs to the EF-Ts family.

It is found in the cytoplasm. Functionally, associates with the EF-Tu.GDP complex and induces the exchange of GDP to GTP. It remains bound to the aminoacyl-tRNA.EF-Tu.GTP complex up to the GTP hydrolysis stage on the ribosome. This Hydrogenobaculum sp. (strain Y04AAS1) protein is Elongation factor Ts.